Here is a 713-residue protein sequence, read N- to C-terminus: Calpain-1 catalytic subunit (713 aa).

The 300-residue stretch at 55-354 (LFQDDAFPPV…FTKLEICNLT (300 aa)) folds into the Calpain catalytic domain. Residues cysteine 115, histidine 272, and asparagine 296 contribute to the active site. At threonine 354 the chain carries Phosphothreonine. The tract at residues 355–525 (PDALKSRTLR…KKAGTQELDD (171 aa)) is domain III. Positions 526–541 (QIQANLPDEKVLSEEE) are linker. The domain IV stretch occupies residues 542-712 (IDDNFKTLFS…LFKWLQLTMF (171 aa)). 4 EF-hand domains span residues 557–575 (DMEISVKELQTILNRIISK), 584–609 (FSLESCRSMVNLMDRDGNGKLGLVEF), 614–649 (NRIRNYLTIFRKFDLDKSGSMSAYEMRMAIEAAGFK), and 679–713 (VRLETMFRFFKILDTDLDGVVTFDLFKWLQLTMFA). Aspartate 597, aspartate 599, asparagine 601, lysine 603, glutamate 608, aspartate 627, aspartate 629, serine 631, serine 633, and glutamate 638 together coordinate Ca(2+).

This sequence belongs to the peptidase C2 family. As to quaternary structure, forms a heterodimer with a small (regulatory) subunit CAPNS1. It depends on Ca(2+) as a cofactor. Undergoes calcium-induced successive autoproteolytic cleavages that generate a membrane-bound 78 kDa active form and an intracellular 75 kDa active form. Calpastatin reduces with high efficiency the transition from 78 kDa to 75 kDa calpain forms.

It is found in the cytoplasm. It localises to the cell membrane. It catalyses the reaction Broad endopeptidase specificity.. Its activity is regulated as follows. Activated by micromolar concentrations of calcium and inhibited by calpastatin. Its function is as follows. Calcium-regulated non-lysosomal thiol-protease which catalyzes limited proteolysis of substrates involved in cytoskeletal remodeling and signal transduction. Proteolytically cleaves CTBP1 at 'Asn-364', 'Gly-377' and 'His-399'. Cleaves and activates caspase-7 (CASP7). The protein is Calpain-1 catalytic subunit of Rattus norvegicus (Rat).